The sequence spans 165 residues: MDIAHDLQSIAAQEHALVFPHFDADTAWQLGAYLHEIAKARGLALAIDIRSFGQPLFFSLLEGATPDNVDWARRKGNTVAHFRRSSYAVGLKLQQSNATLADKHGLPVSDYAAHGGAFPLIAKGTGVIGSVTVSGLPQRADHELVVEALCAHLGHDYSKLALAKA.

The protein belongs to the UPF0303 family.

In Paraburkholderia phymatum (strain DSM 17167 / CIP 108236 / LMG 21445 / STM815) (Burkholderia phymatum), this protein is UPF0303 protein Bphy_1660.